The primary structure comprises 785 residues: Endonuclease MutS2 (785 aa).

333–340 (GPNTGGKT) contacts ATP. The region spanning 710 to 785 (LDLRGQRYDE…GNGATIVQLK (76 aa)) is the Smr domain.

It belongs to the DNA mismatch repair MutS family. MutS2 subfamily. As to quaternary structure, homodimer. Binds to stalled ribosomes, contacting rRNA.

Functionally, endonuclease that is involved in the suppression of homologous recombination and thus may have a key role in the control of bacterial genetic diversity. Its function is as follows. Acts as a ribosome collision sensor, splitting the ribosome into its 2 subunits. Detects stalled/collided 70S ribosomes which it binds and splits by an ATP-hydrolysis driven conformational change. Acts upstream of the ribosome quality control system (RQC), a ribosome-associated complex that mediates the extraction of incompletely synthesized nascent chains from stalled ribosomes and their subsequent degradation. Probably generates substrates for RQC. This Lactobacillus acidophilus (strain ATCC 700396 / NCK56 / N2 / NCFM) protein is Endonuclease MutS2.